The sequence spans 344 residues: Methionine import ATP-binding protein MetN (344 aa).

An ABC transporter domain is found at 2–241; that stretch reads IEINQVNKVF…PKTELAHDFI (240 aa). 38–45 is an ATP binding site; sequence GSSGAGKS.

Belongs to the ABC transporter superfamily. Methionine importer (TC 3.A.1.24) family. The complex is composed of two ATP-binding proteins (MetN), two transmembrane proteins (MetI) and a solute-binding protein (MetQ).

It is found in the cell inner membrane. It carries out the reaction L-methionine(out) + ATP + H2O = L-methionine(in) + ADP + phosphate + H(+). It catalyses the reaction D-methionine(out) + ATP + H2O = D-methionine(in) + ADP + phosphate + H(+). Part of the ABC transporter complex MetNIQ involved in methionine import. Responsible for energy coupling to the transport system. This Vibrio vulnificus (strain CMCP6) protein is Methionine import ATP-binding protein MetN.